We begin with the raw amino-acid sequence, 183 residues long: Adenine phosphoribosyltransferase 3 (183 aa).

Belongs to the purine/pyrimidine phosphoribosyltransferase family. As to quaternary structure, homodimer.

The protein resides in the cytoplasm. It catalyses the reaction AMP + diphosphate = 5-phospho-alpha-D-ribose 1-diphosphate + adenine. Its pathway is purine metabolism; AMP biosynthesis via salvage pathway; AMP from adenine: step 1/1. Catalyzes a salvage reaction resulting in the formation of AMP, that is energically less costly than de novo synthesis. May contribute to the recycling of adenine into adenylate nucleotides and the inactivation of cytokinins by phosphoribosylation. Possesses low activity toward adenine and cytokinins. The chain is Adenine phosphoribosyltransferase 3 (APT3) from Arabidopsis thaliana (Mouse-ear cress).